Here is a 217-residue protein sequence, read N- to C-terminus: Lipid A acyltransferase PagP (217 aa).

The first 24 residues, 1–24 (MYLKRILITLSLITLPIVPCLSYA), serve as a signal peptide directing secretion. Catalysis depends on residues His-89, Asp-132, and Ser-133.

The protein belongs to the lipid A palmitoyltransferase family. As to quaternary structure, homodimer.

It localises to the cell outer membrane. It catalyses the reaction a lipid A + a 1,2-diacyl-sn-glycero-3-phosphocholine = a hepta-acyl lipid A + a 2-acyl-sn-glycero-3-phosphocholine. It carries out the reaction a lipid IVA + a 1,2-diacyl-sn-glycero-3-phosphocholine = a lipid IVB + a 2-acyl-sn-glycero-3-phosphocholine. The enzyme catalyses a lipid IIA + a 1,2-diacyl-sn-glycero-3-phosphocholine = a lipid IIB + a 2-acyl-sn-glycero-3-phosphocholine. Transfers a fatty acid residue from the sn-1 position of a phospholipid to the N-linked hydroxyfatty acid chain on the proximal unit of lipid A or its precursors. This is Lipid A acyltransferase PagP from Pectobacterium atrosepticum (strain SCRI 1043 / ATCC BAA-672) (Erwinia carotovora subsp. atroseptica).